The following is a 291-amino-acid chain: Membrane protein insertase YidC (291 aa).

Positions M1–G19 are cleaved as a signal peptide. C20 is lipidated: N-palmitoyl cysteine. Residue C20 is the site of S-diacylglycerol cysteine attachment. Transmembrane regions (helical) follow at residues Y56–L76, A134–L154, W170–I190, and M211–L231. The tract at residues F266–K291 is disordered.

It belongs to the OXA1/ALB3/YidC family. Type 2 subfamily.

The protein resides in the cell membrane. In terms of biological role, required for the insertion and/or proper folding and/or complex formation of integral membrane proteins into the membrane. Involved in integration of membrane proteins that insert both dependently and independently of the Sec translocase complex, as well as at least some lipoproteins. The protein is Membrane protein insertase YidC of Staphylococcus haemolyticus (strain JCSC1435).